Here is a 1188-residue protein sequence, read N- to C-terminus: DNA-directed RNA polymerase II subunit 2 (1188 aa).

D800 serves as a coordination point for Mg(2+). Disordered regions lie at residues 852-871 (SYDK…VSGE) and 877-897 (KTTP…TRRD). Positions 879-892 (TPISQDEAQGQSSR) are enriched in polar residues. C1124, C1127, C1142, and C1145 together coordinate Zn(2+). A C4-type zinc finger spans residues 1124-1145 (CEVCGLIAIANLKKNSFECRGC).

This sequence belongs to the RNA polymerase beta chain family. As to quaternary structure, component of the RNA polymerase II complex consisting of at least 12 subunits.

The protein localises to the nucleus. It catalyses the reaction RNA(n) + a ribonucleoside 5'-triphosphate = RNA(n+1) + diphosphate. Its function is as follows. DNA-dependent RNA polymerase catalyzes the transcription of DNA into RNA using the four ribonucleoside triphosphates as substrates. Second largest component of RNA polymerase II which synthesizes mRNA precursors and many functional non-coding RNAs. Proposed to contribute to the polymerase catalytic activity and forms the polymerase active center together with the largest subunit. Pol II is the central component of the basal RNA polymerase II transcription machinery. It is composed of mobile elements that move relative to each other. NRPB2 is part of the core element with the central large cleft, the clamp element that moves to open and close the cleft and the jaws that are thought to grab the incoming DNA template. Essential for the completion of the three rounds of mitosis in female megaspores required for the development of mature gametophytes. The polypeptide is DNA-directed RNA polymerase II subunit 2 (NRPB2) (Arabidopsis thaliana (Mouse-ear cress)).